The primary structure comprises 715 residues: Polyribonucleotide nucleotidyltransferase (715 aa).

Mg(2+) is bound by residues D489 and D495. The region spanning 556 to 615 (PRIETLRIPTEKIREVIGTGGKVIREICEKTGAKINIEDDGTVKVASSDGNSIKAAINWI) is the KH domain. In terms of domain architecture, S1 motif spans 625–693 (GHIYDGTVVK…DRGKVRLSMR (69 aa)).

It belongs to the polyribonucleotide nucleotidyltransferase family. Requires Mg(2+) as cofactor.

The protein localises to the cytoplasm. The catalysed reaction is RNA(n+1) + phosphate = RNA(n) + a ribonucleoside 5'-diphosphate. Its function is as follows. Involved in mRNA degradation. Catalyzes the phosphorolysis of single-stranded polyribonucleotides processively in the 3'- to 5'-direction. The polypeptide is Polyribonucleotide nucleotidyltransferase (Beijerinckia indica subsp. indica (strain ATCC 9039 / DSM 1715 / NCIMB 8712)).